Consider the following 552-residue polypeptide: Sensor histidine kinase DpiB (552 aa).

Topologically, residues 1–21 (MLQLNENKQFAFFQRLAFPLR) are cytoplasmic. The chain crosses the membrane as a helical span at residues 22-42 (IFLLILVFSIFVIAALAQYFT). The Periplasmic segment spans residues 43 to 182 (ASFEDYLTLH…DSWRAEFLLP (140 aa)). Residues 183-203 (MAGVFVVLLGILMLLSWFLAA) form a helical membrane-spanning segment. At 204–552 (HIRRQMMGME…NDSSINPIDR (349 aa)) the chain is on the cytoplasmic side. In terms of domain architecture, PAS spans 222-292 (RQQEALFSSV…IDEKRQDVVA (71 aa)). The Histidine kinase domain maps to 344 to 541 (TLRHEHLNWM…LFSIYIPKVK (198 aa)). His-347 bears the Phosphohistidine; by autocatalysis mark.

Autophosphorylated.

Its subcellular location is the cell inner membrane. The catalysed reaction is ATP + protein L-histidine = ADP + protein N-phospho-L-histidine.. With respect to regulation, autophosphorylation is induced in vitro by dithiothreitol (DTT). Its function is as follows. Member of the two-component regulatory system DpiA/DpiB, which is essential for expression of citrate-specific fermentation genes and genes involved in plasmid inheritance. Could be involved in response to both the presence of citrate and external redox conditions. Functions as a sensor kinase that phosphorylates DpiA in the presence of citrate. This Escherichia coli (strain K12) protein is Sensor histidine kinase DpiB (dpiB).